Consider the following 727-residue polypeptide: Glucans biosynthesis glucosyltransferase H (727 aa).

Residues 18–43 (SAMPNERPGAMEPQSLSQMPEGFPRR) are disordered. The next 7 membrane-spanning stretches (helical) occupy residues 58–78 (FFVV…MGAV), 94–114 (LFAI…AGFF), 278–298 (LQQF…GWWV), 408–428 (IMAY…LMLA), 460–480 (LFYI…LLLL), 496–516 (ILSV…MMFI), and 572–592 (LLAW…ISAW).

It belongs to the glycosyltransferase 2 family. OpgH subfamily.

The protein resides in the cell inner membrane. The protein operates within glycan metabolism; osmoregulated periplasmic glucan (OPG) biosynthesis. In terms of biological role, involved in the biosynthesis of osmoregulated periplasmic glucans (OPGs). The polypeptide is Glucans biosynthesis glucosyltransferase H (Shewanella sp. (strain ANA-3)).